A 359-amino-acid polypeptide reads, in one-letter code: UDP-2-acetamido-2-deoxy-3-oxo-D-glucuronate aminotransferase (359 aa).

The UDP-2-acetamido-2-deoxy-alpha-D-ribo-hex-3-uluronate site is built by G29, Y31, and S184. Position 185 is an N6-(pyridoxal phosphate)lysine (K185). The UDP-2-acetamido-2-deoxy-alpha-D-ribo-hex-3-uluronate site is built by R229, H308, and Y309.

The protein belongs to the DegT/DnrJ/EryC1 family. As to quaternary structure, homodimer. Pyridoxal 5'-phosphate serves as cofactor.

It carries out the reaction UDP-2-acetamido-2-deoxy-alpha-D-ribo-hex-3-uluronate + L-glutamate = UDP-2-acetamido-3-amino-2,3-dideoxy-alpha-D-glucuronate + 2-oxoglutarate. It participates in bacterial outer membrane biogenesis; LPS O-antigen biosynthesis. In terms of biological role, plays a role in the biosynthesis of B-band O antigen for serotype O5. Catalyzes the amination of UDP-2-acetamido-2-deoxy-3-oxo-D-glucuronic acid (UDP-3-oxo-D-GlcNAcA) to UDP-2-acetamido-3-amino-2,3-dideoxy-D-glucuronic acid (UDP-GlcNAc3NA), using L-glutamate as the preferred amine donor. The sequence is that of UDP-2-acetamido-2-deoxy-3-oxo-D-glucuronate aminotransferase from Pseudomonas aeruginosa (strain ATCC 15692 / DSM 22644 / CIP 104116 / JCM 14847 / LMG 12228 / 1C / PRS 101 / PAO1).